The sequence spans 597 residues: Probable translation initiation factor IF-2 (597 aa).

One can recognise a tr-type G domain in the interval 4–221 (IRQPIIAVLG…LIAGLSQKYL (218 aa)). Positions 13 to 20 (GHVDHGKT) are G1. 13–20 (GHVDHGKT) is a binding site for GTP. The tract at residues 38–42 (GITQH) is G2. The segment at 77-80 (DTPG) is G3. GTP is bound by residues 77 to 81 (DTPGH) and 131 to 134 (NKID). Positions 131–134 (NKID) are G4. The segment at 199–201 (SAK) is G5.

The protein belongs to the TRAFAC class translation factor GTPase superfamily. Classic translation factor GTPase family. IF-2 subfamily.

Its function is as follows. Function in general translation initiation by promoting the binding of the formylmethionine-tRNA to ribosomes. Seems to function along with eIF-2. The polypeptide is Probable translation initiation factor IF-2 (Thermococcus onnurineus (strain NA1)).